The following is a 69-amino-acid chain: FXYD domain-containing ion transport regulator 11 (69 aa).

Residues M1–A22 form the signal peptide. Residues N23–R33 are Extracellular-facing. A helical membrane pass occupies residues I34–G54. The Cytoplasmic segment spans residues Q55 to I69.

The protein belongs to the FXYD family. In terms of tissue distribution, detected in adult gill and in larval skin at 2 days post-fertilization (at protein level). In adult gill, strong expression is found in the basal regions of the secondary lamellae.

It is found in the cell membrane. Functionally, may modulate the activity of a sodium/potassium-transporting ATPase. The protein is FXYD domain-containing ion transport regulator 11 of Danio rerio (Zebrafish).